The sequence spans 545 residues: Afadin- and alpha-actinin-binding protein B (545 aa).

Coiled-coil stretches lie at residues 106-287 and 358-442; these read RSKE…SQRK and ARGD…AIRL. Positions 497 to 545 are disordered; it reads HDRHLASSGDHYQRPRKTLPITPSSKHSLTQRESVAWRDSSISPNGTDF. Composition is skewed to polar residues over residues 517–529 and 536–545; these read ITPSSKHSLTQRE and SSISPNGTDF.

This sequence belongs to the ADIP family. In terms of assembly, interacts with WRAP73.

The protein localises to the cell junction. It is found in the adherens junction. Its subcellular location is the cytoplasm. It localises to the cytoskeleton. The protein resides in the microtubule organizing center. The protein localises to the centrosome. It is found in the centriolar satellite. In terms of biological role, belongs to an adhesion system, which plays a role in the organization of homotypic, interneuronal and heterotypic cell-cell adherens junctions (AJs). Involved in cell movement. Acts as a centrosome maturation factor, probably by maintaining the integrity of the pericentriolar material and proper microtubule nucleation at mitotic spindle poles. The function seems to implicate at least in part WRAP73; the SSX2IP:WRAP73 complex is proposed to act as regulator of spindle anchoring at the mitotic centrosome. The protein is Afadin- and alpha-actinin-binding protein B (ssx2ip-b) of Xenopus laevis (African clawed frog).